We begin with the raw amino-acid sequence, 650 residues long: Threonine--tRNA ligase, chloroplastic/mitochondrial 2 (650 aa).

3 residues coordinate Zn(2+): Cys347, His398, and His524.

This sequence belongs to the class-II aminoacyl-tRNA synthetase family.

The protein resides in the plastid. It is found in the chloroplast. It localises to the mitochondrion. The enzyme catalyses tRNA(Thr) + L-threonine + ATP = L-threonyl-tRNA(Thr) + AMP + diphosphate + H(+). This Arabidopsis thaliana (Mouse-ear cress) protein is Threonine--tRNA ligase, chloroplastic/mitochondrial 2.